Consider the following 248-residue polypeptide: Phycocyanobilin:ferredoxin oxidoreductase (248 aa).

Belongs to the HY2 family.

It catalyses the reaction (2R,3Z)-phycocyanobilin + 4 oxidized [2Fe-2S]-[ferredoxin] = biliverdin IXalpha + 4 reduced [2Fe-2S]-[ferredoxin] + 4 H(+). Functionally, catalyzes the four-electron reduction of biliverdin IX-alpha (2-electron reduction at both the A and D rings); the reaction proceeds via an isolatable 2-electron intermediate, 181,182-dihydrobiliverdin. The protein is Phycocyanobilin:ferredoxin oxidoreductase (pcyA) of Synechococcus elongatus (strain ATCC 33912 / PCC 7942 / FACHB-805) (Anacystis nidulans R2).